The chain runs to 155 residues: RNA pyrophosphohydrolase (155 aa).

The Nudix hydrolase domain maps to 6 to 148 (GYRANVAIVL…KQDVYRRALT (143 aa)). A Nudix box motif is present at residues 38–59 (GGVATGETPLQAMYRELYEEVG).

This sequence belongs to the Nudix hydrolase family. RppH subfamily. A divalent metal cation serves as cofactor.

Functionally, accelerates the degradation of transcripts by removing pyrophosphate from the 5'-end of triphosphorylated RNA, leading to a more labile monophosphorylated state that can stimulate subsequent ribonuclease cleavage. The protein is RNA pyrophosphohydrolase of Francisella philomiragia subsp. philomiragia (strain ATCC 25017 / CCUG 19701 / FSC 153 / O#319-036).